Reading from the N-terminus, the 366-residue chain is MTPEHLPTEQYEAQLAEKVVRLQSMMAPFSDLVPEVFRSPVSHYRMRAEFRIWHDGDDLYHIIFDQQTKSRIRVDSFPAASELINQLMTAMIAGVRNNPVLRHKLFQIDYLTTLSNQAVVSLLYHKKLDDEWRQQAEVLRDALRAQNLNVHLIGRATKTKIELDQDYIDERLPVAGREMIYRQVENSFTQPNAAMNIQMLEWALDVTKDSKGDLLELYCGNGNFSLALARNFDRVLATEIAKPSVAAAQYNIAANHIDNVQIIRMAAEEFTQAMNGVREFNRLQGIDLKSYQCETIFVDPPRSGLDSETEKMVQAYPRILYISCNPETLCKNLETLSQTHKVERLALFDQFPYTHHMECGVLLTAK.

Positions 190, 218, 223, 239, and 299 each coordinate S-adenosyl-L-methionine. Cysteine 324 (nucleophile) is an active-site residue. Glutamate 358 functions as the Proton acceptor in the catalytic mechanism.

Belongs to the class I-like SAM-binding methyltransferase superfamily. RNA M5U methyltransferase family. TrmA subfamily.

The catalysed reaction is uridine(54) in tRNA + S-adenosyl-L-methionine = 5-methyluridine(54) in tRNA + S-adenosyl-L-homocysteine + H(+). It catalyses the reaction uridine(341) in tmRNA + S-adenosyl-L-methionine = 5-methyluridine(341) in tmRNA + S-adenosyl-L-homocysteine + H(+). Its function is as follows. Dual-specificity methyltransferase that catalyzes the formation of 5-methyluridine at position 54 (m5U54) in all tRNAs, and that of position 341 (m5U341) in tmRNA (transfer-mRNA). The protein is tRNA/tmRNA (uracil-C(5))-methyltransferase of Escherichia fergusonii (strain ATCC 35469 / DSM 13698 / CCUG 18766 / IAM 14443 / JCM 21226 / LMG 7866 / NBRC 102419 / NCTC 12128 / CDC 0568-73).